The chain runs to 309 residues: Pseudouridine-5'-phosphate glycosidase 2 (309 aa).

The active-site Proton donor is the Glu-26. Residues Lys-87 and Val-107 each contribute to the substrate site. A Mn(2+)-binding site is contributed by Asp-139. 141–143 (SAD) provides a ligand contact to substrate. Catalysis depends on Lys-160, which acts as the Nucleophile.

Belongs to the pseudouridine-5'-phosphate glycosidase family. As to quaternary structure, homotrimer. Requires Mn(2+) as cofactor.

It catalyses the reaction D-ribose 5-phosphate + uracil = psi-UMP + H2O. In terms of biological role, catalyzes the reversible cleavage of pseudouridine 5'-phosphate (PsiMP) to ribose 5-phosphate and uracil. Functions biologically in the cleavage direction, as part of a pseudouridine degradation pathway. This chain is Pseudouridine-5'-phosphate glycosidase 2, found in Rhizobium johnstonii (strain DSM 114642 / LMG 32736 / 3841) (Rhizobium leguminosarum bv. viciae).